Here is a 1254-residue protein sequence, read N- to C-terminus: NPC intracellular cholesterol transporter 1 homolog 1b (1254 aa).

A signal peptide spans 1–16 (MKVIFATIWLIAGAWS). The Extracellular segment spans residues 17 to 272 (QSAEQLGCIW…WKIAGLYGVT (256 aa)). 8 disulfide bridges follow: Cys24–Cys81, Cys62–Cys116, Cys82–Cys120, Cys104–Cys241, Cys107–Cys161, Cys178–Cys186, Cys231–Cys246, and Cys243–Cys250. N-linked (GlcNAc...) asparagine glycans are attached at residues Asn123 and Asn132. Residues 273-293 (FILALIIACALSFFIFWGAFG) form a helical membrane-spanning segment. Residues 294-325 (KTSAPSVCMPTLFGEFFYHGFRIWGTFCAKHP) are Cytoplasmic-facing. A helical transmembrane segment spans residues 326-346 (VIVLALCSWAIAGLSFGIRYM). Topologically, residues 347 to 593 (TITTDPVELW…AIVELSEGEV (247 aa)) are extracellular. Asn389 carries an N-linked (GlcNAc...) asparagine glycan. A disulfide bond links Cys438 and Cys454. Asn479 is a glycosylation site (N-linked (GlcNAc...) asparagine). A disulfide bridge connects residues Cys491 and Cys500. The SSD domain occupies 592–757 (EVSTVVISYV…ITAFVALMAI (166 aa)). Residues 594–614 (STVVISYVVMFVYVAIALGHI) form a helical membrane-spanning segment. The Cytoplasmic portion of the chain corresponds to 615 to 625 (RSCRGFLRESR). The helical transmembrane segment at 626-646 (IMLAIGGIVIVLASVVCSLGF) threads the bilayer. Residues 647–657 (WGYLDVTTTML) lie on the Extracellular side of the membrane. A helical membrane pass occupies residues 658–678 (AIEVIPFLVLAVGVDNIFIMV). Residues 679–736 (HTYQRLDHSKFKTTHEAIGEAIGQVGPSILQTAGSEMACFAIGCISDMPAVKTFAMYA) lie on the Cytoplasmic side of the membrane. Residues 737–757 (AIAILLDFLLQITAFVALMAI) traverse the membrane as a helical segment. Residues 758–815 (DEKRYLDGRLDMLCCVKSGGKKINDEDGDGVDRPKEVGLLETLFKNFYSPFLLSKPVK) lie on the Extracellular side of the membrane. A helical membrane pass occupies residues 816 to 836 (VSVLLIFTVITCLSLMVTPSI). The Cytoplasmic segment spans residues 837-857 (EKGLDQEMSMPKNSHVVKYFR). The helical transmembrane segment at 858 to 878 (YMVDLLAMGAPVYWVLKPGLN) threads the bilayer. Residues 879-1079 (YSEPLQQNLI…EQYLTIWGDA (201 aa)) are Extracellular-facing. A disulfide bridge connects residues Cys889 and Cys894. 2 N-linked (GlcNAc...) asparagine glycosylation sites follow: Asn896 and Asn939. 3 disulfide bridges follow: Cys935–Cys990, Cys936–Cys958, and Cys946–Cys955. A helical transmembrane segment spans residues 1080 to 1100 (MFSLGMSLVAIFLVTLLITGL). Residues 1101-1105 (DITST) are Cytoplasmic-facing. A helical transmembrane segment spans residues 1106–1126 (FIVLFMVICILINMLGMMWAW). At 1127 to 1132 (SINLNA) the chain is on the extracellular side. The helical transmembrane segment at 1133–1153 (ISLVNLVVCVGIGVEFVAHIV) threads the bilayer. At 1154-1174 (RSFKRAEGTAQERARHSLNVT) the chain is on the cytoplasmic side. A helical membrane pass occupies residues 1175–1195 (GSSVLSGITLTKFAGIVVLGF). Over 1196–1207 (SNSQIFQVFYFR) the chain is Extracellular. A helical transmembrane segment spans residues 1208–1228 (MYLGIVLIGAAHGLILLPVLL). Over 1229–1254 (SLLGPPQKLARSSGAEPTASITITTN) the chain is Cytoplasmic.

Belongs to the patched family. Expressed in the midgut.

It is found in the cell membrane. It catalyses the reaction cholesterol(in) = cholesterol(out). Important for cholesterol absorption at the midgut epithelium. Acts only in the early steps of sterol absorption, prior to Npc1a-dependent intracellular sterol trafficking. This chain is NPC intracellular cholesterol transporter 1 homolog 1b, found in Drosophila melanogaster (Fruit fly).